The primary structure comprises 87 residues: RNA-binding protein Hfq (87 aa).

The Sm domain occupies 9–68; sequence DPFLNALRRERIPVSIYLVNGIKLQGQIESFDQFVILLKNTVSQMVYKHAISTVVPARAV.

It belongs to the Hfq family. As to quaternary structure, homohexamer.

Functionally, RNA chaperone that binds small regulatory RNA (sRNAs) and mRNAs to facilitate mRNA translational regulation in response to envelope stress, environmental stress and changes in metabolite concentrations. Also binds with high specificity to tRNAs. The chain is RNA-binding protein Hfq from Aeromonas hydrophila subsp. hydrophila (strain ATCC 7966 / DSM 30187 / BCRC 13018 / CCUG 14551 / JCM 1027 / KCTC 2358 / NCIMB 9240 / NCTC 8049).